The following is a 205-amino-acid chain: Ras-related protein Rab-1A (205 aa).

N-acetylserine is present on serine 2. The GTP site is built by serine 20, glycine 21, glycine 23, lysine 24, serine 25, cysteine 26, glutamate 38, and threonine 43. Serine 25 is a binding site for Mg(2+). The Switch 1 motif lies at 34-48 (DTYTESYISTIGVDF). Threonine 43 serves as a coordination point for Mg(2+). Residues lysine 49 and lysine 61 each participate in a glycyl lysine isopeptide (Lys-Gly) (interchain with G-Cter in ubiquitin) cross-link. Aspartate 66 is a binding site for Mg(2+). Residues 66 to 83 (DTAGQERFRTITSSYYRG) carry the Switch 2 motif. Positions 69, 124, 125, 127, 155, and 156 each coordinate GTP. The disordered stretch occupies residues 178–205 (PGATAGGAEKSNVKIQSTPVKQSGGGCC). Position 194 is a phosphoserine; by CDK1 (serine 194). S-geranylgeranyl cysteine attachment occurs at residues cysteine 204 and cysteine 205.

Belongs to the small GTPase superfamily. Rab family. As to quaternary structure, may interact with YIPF5. Interacts with C9orf72; the interaction mediates recruitment of RAB1A to the ATG1/ULK1 kinase complex. Interacts with GDI1; this promotes dissociation from membranes. It depends on Mg(2+) as a cofactor. Post-translationally, phosphorylated by CDK1 kinase during mitosis. In terms of processing, ubiquitinated via 'Lys-11'-linked ubiquitination on Lys-49 and Lys-61; impairing the recruitment of guanosine diphosphate (GDP) dissociation inhibitor 1/GDI1.

The protein localises to the golgi apparatus. It is found in the endoplasmic reticulum. Its subcellular location is the early endosome. It localises to the cytoplasm. The protein resides in the cytosol. The protein localises to the membrane. It is found in the melanosome. The catalysed reaction is GTP + H2O = GDP + phosphate + H(+). With respect to regulation, regulated by guanine nucleotide exchange factors (GEFs) which promote the exchange of bound GDP for free GTP. Regulated by GTPase activating proteins (GAPs) which increase the GTP hydrolysis activity. Inhibited by GDP dissociation inhibitors (GDIs). The small GTPases Rab are key regulators of intracellular membrane trafficking, from the formation of transport vesicles to their fusion with membranes. Rabs cycle between an inactive GDP-bound form and an active GTP-bound form that is able to recruit to membranes different sets of downstream effectors directly responsible for vesicle formation, movement, tethering and fusion. RAB1A regulates vesicular protein transport from the endoplasmic reticulum (ER) to the Golgi compartment and on to the cell surface, and plays a role in IL-8 and growth hormone secretion. Required to modulate the compacted morphology of the Golgi. Regulates the level of CASR present at the cell membrane. Plays a role in cell adhesion and cell migration, via its role in protein trafficking. Plays a role in autophagosome assembly and cellular defense reactions against pathogenic bacteria. Plays a role in microtubule-dependent protein transport by early endosomes and in anterograde melanosome transport. In Sus scrofa (Pig), this protein is Ras-related protein Rab-1A (RAB1A).